The primary structure comprises 1798 residues: Non-reducing polyketide synthase nscA (1798 aa).

An N-terminal acylcarrier protein transacylase domain (SAT) region spans residues 25-256 (RRLDQHSKDR…PLPVYDGLCH (232 aa)). A Ketosynthase family 3 (KS3) domain is found at 392 to 825 (SSKLAIVGMA…GGNTTLLLED (434 aa)). Residues Cys-565, His-700, and His-743 each act as for beta-ketoacyl synthase activity in the active site. The tract at residues 931–1224 (FTGQGAYYHG…LVRSMIPSAP (294 aa)) is malonyl-CoA:ACP transacylase (MAT) domain. Positions 1322 to 1458 (HQITAETVRT…ATILFEDPGA (137 aa)) are N-terminal hotdog fold. Residues 1322–1632 (HQITAETVRT…FRRVPRLLMD (311 aa)) form the PKS/mFAS DH domain. His-1354 (proton acceptor; for dehydratase activity) is an active-site residue. A product template (PT) domain region spans residues 1390 to 1628 (HMNLTDVEVL…GMIRFRRVPR (239 aa)). A C-terminal hotdog fold region spans residues 1486 to 1632 (ASRLSKPLAY…FRRVPRLLMD (147 aa)). The active-site Proton donor; for dehydratase activity is Asp-1543. Residues 1695–1721 (LLATSSGDSTPKEPPIVTPAESERAGP) are disordered. Residues 1721–1798 (PVDNNMISQC…EMTAWIEEYC (78 aa)) enclose the Carrier domain. Residue Ser-1758 is modified to O-(pantetheine 4'-phosphoryl)serine.

The cofactor is pantetheine 4'-phosphate.

It functions in the pathway secondary metabolite biosynthesis. Non-reducing polyketide synthase; part of the gene cluster that mediates the biosynthesis of neosartoricin B, a prenylated anthracenone that probably exhibits T-cell antiproliferative activity, suggestive of a physiological role as an immunosuppressive agent. The non-reducing polyketide synthase nscA probably synthesizes and cyclizes the decaketide backbone. The hydrolase nscB then mediates the product release through hydrolysis followed by spontaneous decarboxylation. The prenyltransferase nscD catalyzes the addition of the dimethylallyl group to the aromatic C5. The FAD-dependent monooxygenase nscC is then responsible for the stereospecific hydroxylation at C2. Neosartoricin B can be converted into two additional compounds neosartoricins C and D. Neosartoricin C is a spirocyclic compound that is cyclized through the attack of C3 hydroxyl on C14, followed by dehydration. On the other hand, neosartoricin D is a further cyclized compound in which attack of C2 on C14 in neosartoricin C results in the formation of the acetal-containing dioxabicyclo-octanone ring. Both of these compounds are novel and possibly represent related metabolites of the gene cluster. The protein is Non-reducing polyketide synthase nscA of Trichophyton rubrum (strain ATCC MYA-4607 / CBS 118892) (Athlete's foot fungus).